Here is a 131-residue protein sequence, read N- to C-terminus: Profilin (131 aa).

Belongs to the profilin family. Occurs in many kinds of cells as a complex with monomeric actin in a 1:1 ratio.

It localises to the cytoplasm. It is found in the cytoskeleton. Functionally, binds to actin and affects the structure of the cytoskeleton. At high concentrations, profilin prevents the polymerization of actin, whereas it enhances it at low concentrations. By binding to PIP2, it inhibits the formation of IP3 and DG. This chain is Profilin, found in Arachis hypogaea (Peanut).